Reading from the N-terminus, the 445-residue chain is StAR-related lipid transfer protein 3 (445 aa).

Over 1–51 (MSKLPRELTRDLERSLPAVASLGSSLSHSQSLSSHLLPPPEKRRAISDVRR) the chain is Cytoplasmic. The MENTAL domain maps to 46-217 (ISDVRRTFCL…YSPPESFAGS (172 aa)). Residues 52–72 (TFCLFVTFDLLFISLLWIIEL) traverse the membrane as a helical segment. At 73–94 (NTNTGIRKNLEQEIIQYNFKTS) the chain is on the extracellular side. The helical transmembrane segment at 95 to 115 (FFDIFVLAFFRFSGLLLGYAV) threads the bilayer. The Cytoplasmic portion of the chain corresponds to 116–120 (LRLRH). Residues 121 to 141 (WWVIAVTTLVSSAFLIVKVIL) form a helical membrane-spanning segment. Over 142 to 148 (SELLSKG) the chain is Extracellular. A helical transmembrane segment spans residues 149-169 (AFGYLLPIVSFVLAWLETWFL). Over 170-445 (DFKVLPQEAE…QRISELGARA (276 aa)) the chain is Cytoplasmic. The FFAT signature appears at 206–212 (QFYSPPE). Ser209 bears the Phosphoserine mark. The 214-residue stretch at 230 to 443 (SFSAQEREYI…LRQRISELGA (214 aa)) folds into the START domain.

The protein belongs to the STARD3 family. As to quaternary structure, homodimer. Interacts (via the MENTAL domain) with STARD3NL. Interacts (via phosphorylated FFAT motif) with VAPA (via MSP domain). Interacts (via phosphorylated FFAT motif) with VAPB (via MSP domain). Interacts (via phosphorylated FFAT motif) with MOSPD2 (via MSP domain); this interaction allows enrichment of MOSPD2 around endosomes. Phosphorylation at Ser-209 is necessary and sufficient for the direct interaction of the phosphorylated FFAT motif with the MSP domain of MOSPD2, VAPA and VAPB and allows the tethering of two membranes that participates in the formation of ER-endosome contacts. Phosphorylation of the FFAT motif leads to conformation changes. Additional phosphorylations around the core FFAT motif (QFYSPPE) are not essential but strengthen the interaction with MOSPD2, VAPA and VAPB. Phosphorylation at Ser-209 of FFAT motif drives membrane tethering between the endoplasmic reticulum and late endosomes via interaction with VAPA and VAPB that in turn allows the efficient transport of sterol mediated by the START domain. In terms of tissue distribution, expressed in retina.

The protein localises to the late endosome membrane. The enzyme catalyses cholesterol(in) = cholesterol(out). Functionally, sterol-binding protein that mediates cholesterol transport from the endoplasmic reticulum to endosomes. The sterol transport mechanism is triggered by phosphorylation of FFAT motif that leads to membrane tethering between the endoplasmic reticulum and late endosomes via interaction with VAPA and VAPB. Acts as a lipid transfer protein that redirects sterol to the endosome at the expense of the cell membrane and favors membrane formation inside endosomes. May also mediate cholesterol transport between other membranes, such as mitochondria membrane or cell membrane. However, such results need additional experimental evidences; probably mainly mediates cholesterol transport from the endoplasmic reticulum to endosomes. Does not activate transcriptional cholesterol sensing. Able to bind other lipids, such as lutein, a xanthophyll carotenoids that form the macular pigment of the retina. This is StAR-related lipid transfer protein 3 from Homo sapiens (Human).